Reading from the N-terminus, the 405-residue chain is Exodeoxyribonuclease 7 large subunit (405 aa).

This sequence belongs to the XseA family. Heterooligomer composed of large and small subunits.

It localises to the cytoplasm. The enzyme catalyses Exonucleolytic cleavage in either 5'- to 3'- or 3'- to 5'-direction to yield nucleoside 5'-phosphates.. In terms of biological role, bidirectionally degrades single-stranded DNA into large acid-insoluble oligonucleotides, which are then degraded further into small acid-soluble oligonucleotides. The protein is Exodeoxyribonuclease 7 large subunit of Syntrophomonas wolfei subsp. wolfei (strain DSM 2245B / Goettingen).